The sequence spans 328 residues: DNA-directed RNA polymerase subunit alpha (328 aa).

The interval 1-234 is alpha N-terminal domain (alpha-NTD); that stretch reads MVREKVKVST…DLFIPFLQAE (234 aa). The interval 268 to 328 is alpha C-terminal domain (alpha-CTD); that stretch reads IALKSIFIDQ…KQIMSILEKK (61 aa).

This sequence belongs to the RNA polymerase alpha chain family. In plastids the minimal PEP RNA polymerase catalytic core is composed of four subunits: alpha, beta, beta', and beta''. When a (nuclear-encoded) sigma factor is associated with the core the holoenzyme is formed, which can initiate transcription.

It localises to the plastid. Its subcellular location is the chloroplast. The enzyme catalyses RNA(n) + a ribonucleoside 5'-triphosphate = RNA(n+1) + diphosphate. DNA-dependent RNA polymerase catalyzes the transcription of DNA into RNA using the four ribonucleoside triphosphates as substrates. This chain is DNA-directed RNA polymerase subunit alpha, found in Citrus sinensis (Sweet orange).